The primary structure comprises 393 residues: Geranylgeranyl pyrophosphate synthase 2 (393 aa).

The isopentenyl diphosphate site is built by K109, R112, and H141. D148 and D152 together coordinate Mg(2+). Residue R157 coordinates dimethylallyl diphosphate. An isopentenyl diphosphate-binding site is contributed by R158. The dimethylallyl diphosphate site is built by K235, T236, and Q275. D278 provides a ligand contact to Mg(2+). 3 residues coordinate dimethylallyl diphosphate: N282, K292, and K302.

The protein belongs to the FPP/GGPP synthase family. Mg(2+) serves as cofactor.

The catalysed reaction is isopentenyl diphosphate + dimethylallyl diphosphate = (2E)-geranyl diphosphate + diphosphate. It carries out the reaction isopentenyl diphosphate + (2E)-geranyl diphosphate = (2E,6E)-farnesyl diphosphate + diphosphate. The enzyme catalyses isopentenyl diphosphate + (2E,6E)-farnesyl diphosphate = (2E,6E,10E)-geranylgeranyl diphosphate + diphosphate. It participates in plant hormone biosynthesis; gibberellin biosynthesis. Its function is as follows. Geranylgeranyl pyrophosphate synthase; part of the gene cluster that mediates the biosynthesis of gibberellins (GAs), diterpenoids that may provide a selective advantage during infection of the preferred host plant, rice. Gibberellins (GAs) are diterpenoids and are synthesized via the mevalonate pathway. Biosynthesis of the major metabolite GA3 (gibberellic acid) from geranylgeranyl diphosphate (GGPP) requires 13 steps. The GGPP produced by the geranylgeranyl diphosphate synthase GGS2 is converted to ent-kaurene via ent-copalyldiphosphate in a two-step cyclization reaction performed by the bifunctional ent-copalyl diphosphate synthase/ent-kaurene synthase enzyme (CPS/KS). Ent-Kaurene is metabolized to GAs by a series of oxidation reactions catalyzed by cytochrome P450 monooxygenases. Cytochrome P450 monooxygenase P450-4 is an ent-kaurene oxidase that catalyzes the three oxidation steps between ent-kaurene and ent-kaurenoic acid. The highly multifunctional cytochrome P450 monooxygenase P450-1 then catalyzes four steps involving oxidation at two carbon atoms, in the main pathway from ent-kaurenoic acid to GA14 via GA12-aldehyde as well as producing kaurenolides and fujenoic acids as by-products. The cytochrome P450 monooxygenase P450-2 then converts GA14 to GA4 by removal of C-20. GA4 is further converted to GA7 by the GA4 desaturase DES via 1,2-desaturation before cytochrome P450 monooxygenase P450-3, a 13-hydroxylase, hydroxylates GA7 to GA3, the final product of the GA-biosynthetic pathway. The polypeptide is Geranylgeranyl pyrophosphate synthase 2 (Gibberella fujikuroi (strain CBS 195.34 / IMI 58289 / NRRL A-6831) (Bakanae and foot rot disease fungus)).